Reading from the N-terminus, the 399-residue chain is Coenzyme A biosynthesis bifunctional protein CoaBC (399 aa).

Positions 1–190 (MQSLAGKKIL…FAPKILVGKR (190 aa)) are phosphopantothenoylcysteine decarboxylase. Catalysis depends on Cys-159, which acts as the Proton donor. A phosphopantothenate--cysteine ligase region spans residues 191-399 (VLITAGPTRE…AVMHLIHEQM (209 aa)). Residues Asp-279, Lys-289, 307-310 (PDIV), Phe-326, Lys-340, and Lys-344 contribute to the CTP site.

It in the N-terminal section; belongs to the HFCD (homo-oligomeric flavin containing Cys decarboxylase) superfamily. In the C-terminal section; belongs to the PPC synthetase family. It depends on Mg(2+) as a cofactor. The cofactor is FMN.

The enzyme catalyses N-[(R)-4-phosphopantothenoyl]-L-cysteine + H(+) = (R)-4'-phosphopantetheine + CO2. It carries out the reaction (R)-4'-phosphopantothenate + L-cysteine + CTP = N-[(R)-4-phosphopantothenoyl]-L-cysteine + CMP + diphosphate + H(+). It functions in the pathway cofactor biosynthesis; coenzyme A biosynthesis; CoA from (R)-pantothenate: step 2/5. Its pathway is cofactor biosynthesis; coenzyme A biosynthesis; CoA from (R)-pantothenate: step 3/5. Its function is as follows. Catalyzes two sequential steps in the biosynthesis of coenzyme A. In the first step cysteine is conjugated to 4'-phosphopantothenate to form 4-phosphopantothenoylcysteine. In the second step the latter compound is decarboxylated to form 4'-phosphopantotheine. This chain is Coenzyme A biosynthesis bifunctional protein CoaBC, found in Vibrio cholerae serotype O1 (strain ATCC 39315 / El Tor Inaba N16961).